A 37-amino-acid chain; its full sequence is Desulforedoxin (37 aa).

Residues Cys10, Cys13, Cys29, and Cys30 each coordinate Fe cation.

It to the N-terminal section of desulfoferrodoxin. As to quaternary structure, homodimer. The cofactor is Fe cation.

Its function is as follows. Nonheme iron protein possibly involved in electron transport. The sequence is that of Desulforedoxin (dsr) from Megalodesulfovibrio gigas (Desulfovibrio gigas).